Consider the following 137-residue polypeptide: Large ribosomal subunit protein uL16 (137 aa).

Belongs to the universal ribosomal protein uL16 family. Part of the 50S ribosomal subunit.

Functionally, binds 23S rRNA and is also seen to make contacts with the A and possibly P site tRNAs. The sequence is that of Large ribosomal subunit protein uL16 from Xanthomonas campestris pv. campestris (strain 8004).